A 918-amino-acid chain; its full sequence is Valine--tRNA ligase (918 aa).

The 'HIGH' region motif lies at Pro50–His60. Residues Lys548–Ser552 carry the 'KMSKS' region motif. Lys551 provides a ligand contact to ATP. The stretch at Asn849–Asn883 forms a coiled coil.

It belongs to the class-I aminoacyl-tRNA synthetase family. ValS type 1 subfamily. As to quaternary structure, monomer.

The protein localises to the cytoplasm. It carries out the reaction tRNA(Val) + L-valine + ATP = L-valyl-tRNA(Val) + AMP + diphosphate. Catalyzes the attachment of valine to tRNA(Val). As ValRS can inadvertently accommodate and process structurally similar amino acids such as threonine, to avoid such errors, it has a 'posttransfer' editing activity that hydrolyzes mischarged Thr-tRNA(Val) in a tRNA-dependent manner. The polypeptide is Valine--tRNA ligase (Prochlorococcus marinus subsp. pastoris (strain CCMP1986 / NIES-2087 / MED4)).